Reading from the N-terminus, the 426-residue chain is MYQAMEVESTSPSGFFLDFYTQSTIPTTDFLNNTNSSHPIRDEKLVKIEIAVLGTCFTLAIINNLCVLLVLLWRRKKVRRMQMFILHLSIADLIVAFFNILPQLIWDITFRFMAGDAMCRFIKYAQMFSLYLSTYILIMTAVDRYRAICHPLSNQTWTPCMVYCKIFIAYAIATIFSIPQAILFQMQEVNEGSGIYDCWVHFEPAWVLTAYALYIFFALYLIPILILFFTYGSICYTIWAKYRHAIKTKKDANTRYPQRRKKKGVILRTHSVHGFSKAKLNSVKLTFAVIVTYIICWSPFFVSQIWWLFDETVVGNAGVVVILLMACLNSCTNPWIYLIFNRNYISNVLPCKCLRRHRVEVAATTETERLSLGSVRRDSRKTSDPKRISESRRISDARRISGKTQKNNSSSPRKTSDQFIYSDKTT.

Over 1–51 the chain is Extracellular; it reads MYQAMEVESTSPSGFFLDFYTQSTIPTTDFLNNTNSSHPIRDEKLVKIEIA. Asn32 and Asn35 each carry an N-linked (GlcNAc...) asparagine glycan. Residues 52-72 traverse the membrane as a helical segment; it reads VLGTCFTLAIINNLCVLLVLL. Residues 73–84 lie on the Cytoplasmic side of the membrane; that stretch reads WRRKKVRRMQMF. Residues 85–105 traverse the membrane as a helical segment; the sequence is ILHLSIADLIVAFFNILPQLI. The Extracellular segment spans residues 106-120; that stretch reads WDITFRFMAGDAMCR. An intrachain disulfide couples Cys119 to Cys198. A helical membrane pass occupies residues 121–141; the sequence is FIKYAQMFSLYLSTYILIMTA. Over 142 to 165 the chain is Cytoplasmic; the sequence is VDRYRAICHPLSNQTWTPCMVYCK. A helical transmembrane segment spans residues 166 to 186; that stretch reads IFIAYAIATIFSIPQAILFQM. Over 187–208 the chain is Extracellular; that stretch reads QEVNEGSGIYDCWVHFEPAWVL. A helical membrane pass occupies residues 209 to 229; it reads TAYALYIFFALYLIPILILFF. The Cytoplasmic portion of the chain corresponds to 230–288; the sequence is TYGSICYTIWAKYRHAIKTKKDANTRYPQRRKKKGVILRTHSVHGFSKAKLNSVKLTFA. A helical transmembrane segment spans residues 289-309; it reads VIVTYIICWSPFFVSQIWWLF. The Extracellular portion of the chain corresponds to 310–319; that stretch reads DETVVGNAGV. Residues 320 to 340 traverse the membrane as a helical segment; the sequence is VVILLMACLNSCTNPWIYLIF. The Cytoplasmic portion of the chain corresponds to 341 to 426; the sequence is NRNYISNVLP…DQFIYSDKTT (86 aa). The disordered stretch occupies residues 373-426; that stretch reads GSVRRDSRKTSDPKRISESRRISDARRISGKTQKNNSSSPRKTSDQFIYSDKTT. Residues 375–399 are compositionally biased toward basic and acidic residues; the sequence is VRRDSRKTSDPKRISESRRISDARR. Residues 402–426 are compositionally biased toward polar residues; sequence GKTQKNNSSSPRKTSDQFIYSDKTT.

It belongs to the G-protein coupled receptor 1 family. Vasopressin/oxytocin receptor subfamily. In terms of tissue distribution, present in various peripheral tissues with highest expression in branchia and vas deferens. Very low expression detected in nervous system.

The protein resides in the cell membrane. Acts as a receptor for cephalotocin. This Octopus vulgaris (Common octopus) protein is Cephalotocin receptor 2.